A 388-amino-acid polypeptide reads, in one-letter code: Alanine racemase 1 (388 aa).

The active-site Proton acceptor; specific for D-alanine is the Lys-40. Residue Lys-40 is modified to N6-(pyridoxal phosphate)lysine. Arg-138 is a substrate binding site. The Proton acceptor; specific for L-alanine role is filled by Tyr-268. Met-316 contacts substrate.

It belongs to the alanine racemase family. Requires pyridoxal 5'-phosphate as cofactor.

It catalyses the reaction L-alanine = D-alanine. It functions in the pathway amino-acid biosynthesis; D-alanine biosynthesis; D-alanine from L-alanine: step 1/1. Catalyzes the interconversion of L-alanine and D-alanine. May also act on other amino acids. The polypeptide is Alanine racemase 1 (alr1) (Caldanaerobacter subterraneus subsp. tengcongensis (strain DSM 15242 / JCM 11007 / NBRC 100824 / MB4) (Thermoanaerobacter tengcongensis)).